Reading from the N-terminus, the 190-residue chain is Vespryn-21 (190 aa).

The signal sequence occupies residues Met1 to Ala20. A B30.2/SPRY domain is found at Ser21–Leu127. The propeptide occupies Gln128–Leu190.

Belongs to the ohanin/vespryn family. As to expression, expressed by the venom gland.

The protein resides in the secreted. Its function is as follows. Neurotoxin that produces dose-dependent hypolocomotion and hyperalgesia in mice. May directly act on the central nervous system, as it is 6500-fold more potent when administered intracerebroventricularly than intraperitoneal. The chain is Vespryn-21 from Drysdalia coronoides (White-lipped snake).